A 428-amino-acid polypeptide reads, in one-letter code: Adenylosuccinate synthetase (428 aa).

Residues 12–18 (GDEGKGK) and 40–42 (GHT) each bind GTP. The active-site Proton acceptor is the Asp13. Residues Asp13 and Gly40 each coordinate Mg(2+). IMP is bound by residues 13–16 (DEGK), 38–41 (NAGH), Thr128, Arg142, Gln223, Thr238, and Arg302. His41 functions as the Proton donor in the catalytic mechanism. Substrate is bound at residue 298 to 304 (TTTGRPR). Residues Arg304, 330–332 (KLD), and 412–414 (SVG) each bind GTP.

Belongs to the adenylosuccinate synthetase family. In terms of assembly, homodimer. Requires Mg(2+) as cofactor.

The protein localises to the cytoplasm. It catalyses the reaction IMP + L-aspartate + GTP = N(6)-(1,2-dicarboxyethyl)-AMP + GDP + phosphate + 2 H(+). Its pathway is purine metabolism; AMP biosynthesis via de novo pathway; AMP from IMP: step 1/2. Plays an important role in the de novo pathway of purine nucleotide biosynthesis. Catalyzes the first committed step in the biosynthesis of AMP from IMP. This is Adenylosuccinate synthetase from Brevibacillus brevis (strain 47 / JCM 6285 / NBRC 100599).